Here is a 248-residue protein sequence, read N- to C-terminus: Leucyl/phenylalanyl-tRNA--protein transferase (248 aa).

This sequence belongs to the L/F-transferase family.

It localises to the cytoplasm. It carries out the reaction N-terminal L-lysyl-[protein] + L-leucyl-tRNA(Leu) = N-terminal L-leucyl-L-lysyl-[protein] + tRNA(Leu) + H(+). It catalyses the reaction N-terminal L-arginyl-[protein] + L-leucyl-tRNA(Leu) = N-terminal L-leucyl-L-arginyl-[protein] + tRNA(Leu) + H(+). The catalysed reaction is L-phenylalanyl-tRNA(Phe) + an N-terminal L-alpha-aminoacyl-[protein] = an N-terminal L-phenylalanyl-L-alpha-aminoacyl-[protein] + tRNA(Phe). Functions in the N-end rule pathway of protein degradation where it conjugates Leu, Phe and, less efficiently, Met from aminoacyl-tRNAs to the N-termini of proteins containing an N-terminal arginine or lysine. This chain is Leucyl/phenylalanyl-tRNA--protein transferase, found in Ralstonia pickettii (strain 12J).